We begin with the raw amino-acid sequence, 636 residues long: DNA-directed RNA polymerase subunit gamma (636 aa).

4 residues coordinate Zn(2+): C71, C73, C86, and C89. 3 residues coordinate Mg(2+): D467, D469, and D471.

Belongs to the RNA polymerase beta' chain family. RpoC1 subfamily. As to quaternary structure, in cyanobacteria the RNAP catalytic core is composed of 2 alpha, 1 beta, 1 beta', 1 gamma and 1 omega subunit. When a sigma factor is associated with the core the holoenzyme is formed, which can initiate transcription. Mg(2+) serves as cofactor. The cofactor is Zn(2+).

It catalyses the reaction RNA(n) + a ribonucleoside 5'-triphosphate = RNA(n+1) + diphosphate. In terms of biological role, DNA-dependent RNA polymerase catalyzes the transcription of DNA into RNA using the four ribonucleoside triphosphates as substrates. This Picosynechococcus sp. (strain ATCC 27264 / PCC 7002 / PR-6) (Agmenellum quadruplicatum) protein is DNA-directed RNA polymerase subunit gamma.